A 614-amino-acid polypeptide reads, in one-letter code: Lamin-2 (614 aa).

Positions 1-10 are enriched in basic residues; the sequence is MSAQVSKKRG. The interval 1–51 is disordered; sequence MSAQVSKKRGGSNPPKTGQHAASSTTSRTESSATSQTIYERQEVETRTQRT. The segment at 1 to 76 is head; the sequence is MSAQVSKKRG…GTAGLAGSPL (76 aa). Over residues 21 to 37 the composition is skewed to low complexity; that stretch reads AASSTTSRTESSATSQT. A coil 1A region spans residues 77–117; that stretch reads SRHQEKEEFKLLNNRFANYIDTIRAQQEEISVLRRKVETVS. In terms of domain architecture, IF rod spans 81-433; the sequence is EKEEFKLLNN…ALLRTEEERL (353 aa). The interval 118–128 is linker 1; that stretch reads SKEVVENQKIK. Residues 129–268 are coil 1B; that stretch reads ERYNLEIANL…EEIVSLRNQR (140 aa). The tract at residues 269 to 286 is linker 2; sequence RTEITEVETRMGEEYQSK. Positions 287–426 are coil 2; that stretch reads IVEQLNDLRA…AELATYNALL (140 aa). A tail region spans residues 427-611; the sequence is RTEEERLNMK…ADSSDHQKNC (185 aa). The interval 433–454 is disordered; sequence LNMKSPPFPSTPDSQRRGTKRR. The short motif at 449–458 is the Nuclear localization signal element; it reads RGTKRRIADS. An LTD domain is found at 462 to 581; sequence TRFRNEASAT…VARREMTQSS (120 aa). Cysteine 611 is lipidated: S-farnesyl cysteine. Residues 612-614 constitute a propeptide, removed in mature form; it reads VIM.

It belongs to the intermediate filament family.

It localises to the nucleus inner membrane. Its function is as follows. Intermediate filament (IF) protein, component of the nuclear lamina, a fibrous layer on the nucleoplasmic side of the inner nuclear membrane, which is thought to provide a framework for the nuclear envelope. The protein is Lamin-2 of Hypsibius exemplaris (Freshwater tardigrade).